A 765-amino-acid polypeptide reads, in one-letter code: Protein BCH2 (765 aa).

The disordered stretch occupies residues 1–31; the sequence is MSFLWGSTKSKKGKNKKAAGSLPSGVVPQQR. A CHS5-binding region spans residues 735–765; the sequence is LECLSKNRNEACLAYERPLPDLPSTIKPLAD.

The protein belongs to the CHAPS family. As to quaternary structure, component of the CHS5/6 complex composed of the 4 CHAPS proteins BCH1, BCH2, BUD7, and CHS6 as well as at least CHS5 and GTP-bound ARF1. The complex interacts with the cargo protein CHS3.

Its subcellular location is the golgi apparatus. It localises to the trans-Golgi network membrane. In terms of biological role, member of the CHS5-ARF1P-binding proteins (CHAPS) which mediates export of specific cargo proteins, including chitin synthase CHS3. This chain is Protein BCH2 (BCH2), found in Saccharomyces cerevisiae (strain ATCC 204508 / S288c) (Baker's yeast).